We begin with the raw amino-acid sequence, 437 residues long: GTPase Obg (437 aa).

An Obg domain is found at 2 to 160; that stretch reads SMFLDTAKIS…RQLELELKIL (159 aa). An OBG-type G domain is found at 161–338; it reads ADVGLVGFPS…LLEATAELLA (178 aa). Residues 167–174, 192–196, 214–217, 284–287, and 319–321 contribute to the GTP site; these read GFPSVGKS, FTTIV, DLPG, NKMD, and SSL. Mg(2+)-binding residues include Ser-174 and Thr-194. Positions 359–437 constitute an OCT domain; sequence GFAETEKDFE…IGKFEFEFVD (79 aa).

The protein belongs to the TRAFAC class OBG-HflX-like GTPase superfamily. OBG GTPase family. As to quaternary structure, monomer. It depends on Mg(2+) as a cofactor.

The protein resides in the cytoplasm. In terms of biological role, an essential GTPase which binds GTP, GDP and possibly (p)ppGpp with moderate affinity, with high nucleotide exchange rates and a fairly low GTP hydrolysis rate. Plays a role in control of the cell cycle, stress response, ribosome biogenesis and in those bacteria that undergo differentiation, in morphogenesis control. This Streptococcus pyogenes serotype M5 (strain Manfredo) protein is GTPase Obg.